The chain runs to 238 residues: SH2 domain-containing adapter protein F (238 aa).

Disordered regions lie at residues methionine 1–tryptophan 70 and glycine 85–serine 121. Serine 39 carries the phosphoserine modification. Residues glutamate 55–glutamine 66 are compositionally biased toward acidic residues. Tyrosine 64 bears the Phosphotyrosine mark. The SH2 domain maps to tryptophan 138–valine 233.

In terms of assembly, interacts with phosphorylated 'Tyr-720' of PDGFRA via its SH2 domain. May become phosphorylated upon binding to PDGFRA.

Functionally, adapter protein which may play a role in the regulation of apoptosis in response to PDGF. This is SH2 domain-containing adapter protein F from Mus musculus (Mouse).